The primary structure comprises 195 residues: Small ribosomal subunit protein eS1 (195 aa).

The protein belongs to the eukaryotic ribosomal protein eS1 family.

In Methanothermobacter thermautotrophicus (strain ATCC 29096 / DSM 1053 / JCM 10044 / NBRC 100330 / Delta H) (Methanobacterium thermoautotrophicum), this protein is Small ribosomal subunit protein eS1.